A 294-amino-acid polypeptide reads, in one-letter code: Putative maltodextrin utilization protein YvdJ (294 aa).

The next 4 membrane-spanning stretches (helical) occupy residues 35-55, 184-204, 228-248, and 249-269; these read LSFLFLFLTACLMAPLAVSFV, MIMMLAYTVVSMIQLLLTFVL, IAICASALPAFAAAAIGMVHF, and DLITVLMIHSCGVTLMISFAF.

The protein resides in the cell membrane. In terms of biological role, could have a role in maltodextrin utilization. The polypeptide is Putative maltodextrin utilization protein YvdJ (yvdJ) (Bacillus subtilis (strain 168)).